The primary structure comprises 303 residues: MAKVSGRSKKTIVDDEISDKTASASESASIALTSKRKRKSPPRNAPLQRSSPYRGVTRHRWTGRYEAHLWDKNSWNDTQTKKGRQVYLGAYDEEEAAARAYDLAALKYWGRDTLLNFPLPSYDEDVKEMEGQSKEEYIGSLRRKSSGFSRGVSKYRGVARHHHNGRWEARIGRVFATQEEAAIAYDIAAIEYRGLNAVTNFDVSRYLNPNAAADKADSDSKPIRSPSREPESSDDNKSPKSEEVIEPSTSPEVIPTRRSFPDDIQTYFGCQDSGKLATEEDVIFDCFNSYINPGFYNEFDYGP.

Residues 1–10 (MAKVSGRSKK) show a composition bias toward basic residues. A disordered region spans residues 1–55 (MAKVSGRSKKTIVDDEISDKTASASESASIALTSKRKRKSPPRNAPLQRSSPYRG). The segment covering 20 to 32 (KTASASESASIAL) has biased composition (polar residues). 2 consecutive DNA-binding regions (AP2/ERF) follow at residues 52–118 (PYRG…LNFP) and 154–202 (KYRG…TNFD). Positions 212-259 (AADKADSDSKPIRSPSREPESSDDNKSPKSEEVIEPSTSPEVIPTRRS) are disordered. The span at 214–243 (DKADSDSKPIRSPSREPESSDDNKSPKSEE) shows a compositional bias: basic and acidic residues.

The protein belongs to the AP2/ERF transcription factor family. AP2 subfamily.

It is found in the nucleus. Functionally, probably acts as a transcriptional activator. Binds to the GCC-box pathogenesis-related promoter element. May be involved in the regulation of gene expression by stress factors and by components of stress signal transduction pathways. In Arabidopsis thaliana (Mouse-ear cress), this protein is AP2-like ethylene-responsive transcription factor At1g79700.